The sequence spans 104 residues: L-rhamnose mutarotase (104 aa).

Tyr-18 lines the substrate pocket. His-22 serves as the catalytic Proton donor. Residues Tyr-41 and 76-77 (WW) contribute to the substrate site.

Belongs to the rhamnose mutarotase family. Homodimer.

The protein localises to the cytoplasm. It catalyses the reaction alpha-L-rhamnose = beta-L-rhamnose. It participates in carbohydrate metabolism; L-rhamnose metabolism. L-rhamnose mutarotase involved in ulvan degradation. Ulvan is the main polysaccharide component of the Ulvales (green seaweed) cell wall. It is composed of disaccharide building blocks comprising 3-sulfated rhamnose (Rha3S) linked to D-glucuronic acid (GlcA), L-iduronic acid (IduA), or D-xylose (Xyl). L-rhamnose mutarotase catalyzes the anomeric conversion of alpha- to beta-L-rhamnose. In Formosa agariphila (strain DSM 15362 / KCTC 12365 / LMG 23005 / KMM 3901 / M-2Alg 35-1), this protein is L-rhamnose mutarotase (rhaM).